A 333-amino-acid chain; its full sequence is Fructose-1,6-bisphosphatase class 1 1 (333 aa).

Mg(2+) contacts are provided by Glu81, Asp100, Leu102, and Asp103. Residues 103-106 (DGSS) and Asn191 each bind substrate. Glu263 is a binding site for Mg(2+).

Belongs to the FBPase class 1 family. Homotetramer. Mg(2+) serves as cofactor.

It is found in the cytoplasm. It carries out the reaction beta-D-fructose 1,6-bisphosphate + H2O = beta-D-fructose 6-phosphate + phosphate. It participates in carbohydrate biosynthesis; Calvin cycle. The protein is Fructose-1,6-bisphosphatase class 1 1 of Cereibacter sphaeroides (strain ATCC 17029 / ATH 2.4.9) (Rhodobacter sphaeroides).